The sequence spans 211 residues: ATP phosphoribosyltransferase (211 aa).

It belongs to the ATP phosphoribosyltransferase family. Short subfamily. In terms of assembly, heteromultimer composed of HisG and HisZ subunits.

It is found in the cytoplasm. It catalyses the reaction 1-(5-phospho-beta-D-ribosyl)-ATP + diphosphate = 5-phospho-alpha-D-ribose 1-diphosphate + ATP. The protein operates within amino-acid biosynthesis; L-histidine biosynthesis; L-histidine from 5-phospho-alpha-D-ribose 1-diphosphate: step 1/9. In terms of biological role, catalyzes the condensation of ATP and 5-phosphoribose 1-diphosphate to form N'-(5'-phosphoribosyl)-ATP (PR-ATP). Has a crucial role in the pathway because the rate of histidine biosynthesis seems to be controlled primarily by regulation of HisG enzymatic activity. The chain is ATP phosphoribosyltransferase from Rippkaea orientalis (strain PCC 8801 / RF-1) (Cyanothece sp. (strain PCC 8801)).